Consider the following 160-residue polypeptide: Large ribosomal subunit protein bL9 (160 aa).

This sequence belongs to the bacterial ribosomal protein bL9 family.

Its function is as follows. Binds to the 23S rRNA. The polypeptide is Large ribosomal subunit protein bL9 (Neorickettsia sennetsu (strain ATCC VR-367 / Miyayama) (Ehrlichia sennetsu)).